The sequence spans 954 residues: Glycine dehydrogenase (decarboxylating) (954 aa).

Lys-701 carries the N6-(pyridoxal phosphate)lysine modification.

This sequence belongs to the GcvP family. As to quaternary structure, the glycine cleavage system is composed of four proteins: P, T, L and H. Pyridoxal 5'-phosphate serves as cofactor.

The enzyme catalyses N(6)-[(R)-lipoyl]-L-lysyl-[glycine-cleavage complex H protein] + glycine + H(+) = N(6)-[(R)-S(8)-aminomethyldihydrolipoyl]-L-lysyl-[glycine-cleavage complex H protein] + CO2. In terms of biological role, the glycine cleavage system catalyzes the degradation of glycine. The P protein binds the alpha-amino group of glycine through its pyridoxal phosphate cofactor; CO(2) is released and the remaining methylamine moiety is then transferred to the lipoamide cofactor of the H protein. The sequence is that of Glycine dehydrogenase (decarboxylating) from Bordetella pertussis (strain Tohama I / ATCC BAA-589 / NCTC 13251).